A 315-amino-acid chain; its full sequence is Neurogenic differentiation factor 4 (315 aa).

A disordered region spans residues 39-71 (ERGSIDGEEDDEEEEDGEKPKKRGPKKKKMTKA). Over residues 44-55 (DGEEDDEEEEDG) the composition is skewed to acidic residues. Positions 58–70 (PKKRGPKKKKMTK) are enriched in basic residues. Positions 78–130 (VRRVKANARERSRMHGLNDALENLRRVMPCYSKTQKLSKIETLRLARNYIWAL) constitute a bHLH domain. Serine 89 bears the Phosphoserine mark.

In terms of assembly, efficient DNA binding requires dimerization with another bHLH protein. Forms a heterodimer with the bHLH protein hes2, and weakly interacts with hey1/hrt1. Post-translationally, serine or threonine phosphorylation within the basic region may regulate neurogenic activity. As to expression, first expressed weakly at stage 12 in primary neuronal precursors. At stages 18 and 21, strongly expressed in the cranial ganglions, with weaker expression remaining in the spinal cord. Later, strongly expressed at sites of neuronal differentiation, namely the eye, forebrain and cranial ganglions.

It is found in the nucleus. Its function is as follows. Probably acts as a transcriptional activator. Mediates neuronal differentiation. Required for the regulation of amacrine cell fate specification in the retina. The chain is Neurogenic differentiation factor 4 (neurod4) from Xenopus laevis (African clawed frog).